The following is a 553-amino-acid chain: 5'-nucleotidase (553 aa).

Positions 1–21 (MKQRLIVKTALSAAILATLAG) are cleaved as a signal peptide. Residue Cys22 is the site of N-palmitoyl cysteine attachment. Cys22 carries S-diacylglycerol cysteine lipidation. A divalent metal cation is bound by residues Asp45, His47, Asp88, Asn120, His221, His256, and Gln258. Residues Phe432 and 501–507 (YNAAGGD) each bind substrate.

Belongs to the 5'-nucleotidase family. Chloride serves as cofactor. The cofactor is Mg(2+).

The protein resides in the cell outer membrane. The enzyme catalyses a ribonucleoside 5'-phosphate + H2O = a ribonucleoside + phosphate. Degradation of extracellular 5'-nucleotides for nutritional needs. In Vibrio vulnificus (strain CMCP6), this protein is 5'-nucleotidase (nutA).